We begin with the raw amino-acid sequence, 356 residues long: UDP-N-acetylglucosamine--N-acetylmuramyl-(pentapeptide) pyrophosphoryl-undecaprenol N-acetylglucosamine transferase (356 aa).

Positions 166, 196, and 290 each coordinate UDP-N-acetyl-alpha-D-glucosamine.

The protein belongs to the glycosyltransferase 28 family. MurG subfamily.

Its subcellular location is the cell membrane. The catalysed reaction is Mur2Ac(oyl-L-Ala-gamma-D-Glu-L-Lys-D-Ala-D-Ala)-di-trans,octa-cis-undecaprenyl diphosphate + UDP-N-acetyl-alpha-D-glucosamine = beta-D-GlcNAc-(1-&gt;4)-Mur2Ac(oyl-L-Ala-gamma-D-Glu-L-Lys-D-Ala-D-Ala)-di-trans,octa-cis-undecaprenyl diphosphate + UDP + H(+). It functions in the pathway cell wall biogenesis; peptidoglycan biosynthesis. Cell wall formation. Catalyzes the transfer of a GlcNAc subunit on undecaprenyl-pyrophosphoryl-MurNAc-pentapeptide (lipid intermediate I) to form undecaprenyl-pyrophosphoryl-MurNAc-(pentapeptide)GlcNAc (lipid intermediate II). The polypeptide is UDP-N-acetylglucosamine--N-acetylmuramyl-(pentapeptide) pyrophosphoryl-undecaprenol N-acetylglucosamine transferase (Staphylococcus aureus (strain USA300)).